The primary structure comprises 273 residues: Bis(5'-nucleosyl)-tetraphosphatase, symmetrical (273 aa).

The protein belongs to the Ap4A hydrolase family.

It catalyses the reaction P(1),P(4)-bis(5'-adenosyl) tetraphosphate + H2O = 2 ADP + 2 H(+). Functionally, hydrolyzes diadenosine 5',5'''-P1,P4-tetraphosphate to yield ADP. This Histophilus somni (strain 2336) (Haemophilus somnus) protein is Bis(5'-nucleosyl)-tetraphosphatase, symmetrical.